The primary structure comprises 239 residues: Orotidine 5'-phosphate decarboxylase (239 aa).

Residues Asp10, Lys32, 59–68 (DLKLHDIPNT), Thr122, Arg184, Gln193, Gly213, and Arg214 contribute to the substrate site. The Proton donor role is filled by Lys61.

It belongs to the OMP decarboxylase family. Type 1 subfamily. In terms of assembly, homodimer.

The catalysed reaction is orotidine 5'-phosphate + H(+) = UMP + CO2. It functions in the pathway pyrimidine metabolism; UMP biosynthesis via de novo pathway; UMP from orotate: step 2/2. Catalyzes the decarboxylation of orotidine 5'-monophosphate (OMP) to uridine 5'-monophosphate (UMP). The protein is Orotidine 5'-phosphate decarboxylase of Geobacillus thermodenitrificans (strain NG80-2).